A 1589-amino-acid chain; its full sequence is Centrosomal protein of 170 kDa protein B (1589 aa).

One can recognise an FHA domain in the interval 23-73 (IFVGREECELMLQSRSVDKQHAVINYDQDRDEHWVKDLGSLNGTFVNDMRI). Disordered stretches follow at residues 130–261 (RSEA…GAAP), 287–309 (ITKF…EMVS), 325–388 (LLHR…RLQR), and 409–583 (FDED…EVEE). Basic and acidic residues-rich tracts occupy residues 147 to 156 (RPEKGDRRPG) and 243 to 253 (PAHEMPTKDAE). Residues 330-344 (GPGDDRHSTKSDLPV) are compositionally biased toward basic and acidic residues. Phosphoserine occurs at positions 360 and 421. Basic and acidic residues-rich tracts occupy residues 430–446 (PKAD…RDRP) and 467–476 (LKREKTEERL). Over residues 478-489 (SPSPASRTPARP) the composition is skewed to low complexity. Ser-480 and Ser-492 each carry phosphoserine. The segment covering 520-530 (EKVPPVLPAPL) has biased composition (pro residues). A Phosphoserine modification is found at Ser-536. Pro residues predominate over residues 538-548 (VGPPTPPPAPT). A Phosphothreonine modification is found at Thr-542. Phosphoserine occurs at positions 597, 619, 655, 711, 721, 746, 748, 751, 753, 772, 829, 853, 954, 972, 986, and 988. 4 disordered regions span residues 598-895 (PELS…LQDL), 934-1316 (DAEC…PYGF), 1350-1374 (DGDT…TPAS), and 1532-1552 (AQPG…PASA). Residues 711-722 (SPAGPESSRRSG) are compositionally biased toward low complexity. The segment covering 957-972 (DTASTVSLRSGKSGPS) has biased composition (polar residues). Basic residues predominate over residues 1029–1038 (SAIRRGHRPR). Ser-1135, Ser-1179, and Ser-1199 each carry phosphoserine. A compositionally biased stretch (polar residues) spans 1221–1230 (AANTATTTGP). Residues 1286 to 1301 (PRAGSSSRARSRAPGP) show a composition bias toward low complexity. Thr-1304 carries the post-translational modification Phosphothreonine. Ser-1356 and Ser-1362 each carry phosphoserine. Residues 1363–1374 (ASLSNMPSTPAS) are compositionally biased toward polar residues. The segment covering 1542–1552 (AAQSPPSPASA) has biased composition (low complexity). Phosphoserine is present on residues Ser-1545 and Ser-1548.

It belongs to the CEP170 family.

Its subcellular location is the cytoplasm. The protein localises to the cytoskeleton. Functionally, plays a role in microtubule organization. In Homo sapiens (Human), this protein is Centrosomal protein of 170 kDa protein B (CEP170B).